A 308-amino-acid polypeptide reads, in one-letter code: Homeobox protein HMX3 (308 aa).

Disordered stretches follow at residues 1-57 and 107-184; these read MPET…GFAL and AEKS…KKKT. The span at 9–19 shows a compositional bias: pro residues; sequence PSAPPPPPPPK. Composition is skewed to basic and acidic residues over residues 135-144 and 156-177; these read AEQKERDPKS and EEGK…PEKK. Residues 181-240 constitute a DNA-binding region (homeobox); the sequence is KKKTRTVFSRSQVFQLESTFDMKRYLSSSERAGLAASLHLTETQVKIWFQNRRNKWKRQL.

It belongs to the HMX homeobox family.

The protein resides in the nucleus. In terms of biological role, transcription factor involved in specification of neuronal cell types and which is required for inner ear and hypothalamus development. Binds to the 5'-CAAGTG-3' core sequence. This is Homeobox protein HMX3 (HMX3) from Gallus gallus (Chicken).